A 349-amino-acid chain; its full sequence is Protein RecA (349 aa).

69–76 (GPESSGKT) provides a ligand contact to ATP.

It belongs to the RecA family.

It localises to the cytoplasm. Functionally, can catalyze the hydrolysis of ATP in the presence of single-stranded DNA, the ATP-dependent uptake of single-stranded DNA by duplex DNA, and the ATP-dependent hybridization of homologous single-stranded DNAs. It interacts with LexA causing its activation and leading to its autocatalytic cleavage. This is Protein RecA from Rippkaea orientalis (strain PCC 8801 / RF-1) (Cyanothece sp. (strain PCC 8801)).